Reading from the N-terminus, the 437-residue chain is Protein translocase subunit SecY (437 aa).

10 helical membrane passes run 19-39 (LFTLGIIVIYRLGAHIPAPGV), 68-88 (LLQITIFALGIMPYITASIIL), 121-141 (VALAILQGTGLVATARSGALF), 156-176 (IFTTIIMVLTMTAGTPPVMWL), 188-208 (GMSIPMFISIAATFPGALWAI), 218-238 (WIEFGTVILIGFVMVALVVFV), 274-294 (GVIPVIFASSLLYIPALIVQF), 317-337 (YIATYFVLIVFFAFFYVAISF), 378-398 (SLYLGLIALVPTMALAGFGGA), and 400-420 (QNFPFGGTSILIIVGVGLETV).

It belongs to the SecY/SEC61-alpha family. In terms of assembly, component of the Sec protein translocase complex. Heterotrimer consisting of SecY, SecE and SecG subunits. The heterotrimers can form oligomers, although 1 heterotrimer is thought to be able to translocate proteins. Interacts with the ribosome. Interacts with SecDF, and other proteins may be involved. Interacts with SecA.

It localises to the cell membrane. The central subunit of the protein translocation channel SecYEG. Consists of two halves formed by TMs 1-5 and 6-10. These two domains form a lateral gate at the front which open onto the bilayer between TMs 2 and 7, and are clamped together by SecE at the back. The channel is closed by both a pore ring composed of hydrophobic SecY resides and a short helix (helix 2A) on the extracellular side of the membrane which forms a plug. The plug probably moves laterally to allow the channel to open. The ring and the pore may move independently. This chain is Protein translocase subunit SecY, found in Streptomyces griseus.